The following is a 336-amino-acid chain: Inositol 2-dehydrogenase (336 aa).

It belongs to the Gfo/Idh/MocA family. In terms of assembly, homotetramer.

The catalysed reaction is myo-inositol + NAD(+) = scyllo-inosose + NADH + H(+). Involved in the oxidation of myo-inositol (MI) to 2-keto-myo-inositol (2KMI or 2-inosose). The protein is Inositol 2-dehydrogenase of Pseudomonas savastanoi pv. phaseolicola (strain 1448A / Race 6) (Pseudomonas syringae pv. phaseolicola (strain 1448A / Race 6)).